Reading from the N-terminus, the 149-residue chain is Protein SprT-like (149 aa).

Residues 4–144 (TDYVKQVSLE…GLCRGKLLLV (141 aa)) form the SprT-like domain. Position 64 (His64) interacts with Zn(2+). Glu65 is an active-site residue. His68 is a Zn(2+) binding site.

This sequence belongs to the SprT family. The cofactor is Zn(2+).

It localises to the cytoplasm. The protein is Protein SprT-like of Streptococcus pneumoniae serotype 4 (strain ATCC BAA-334 / TIGR4).